Consider the following 162-residue polypeptide: Transcription elongation factor GreA (162 aa).

The stretch at 44–72 forms a coiled coil; sequence ENAEYHAAKEKQSHIERRIAELSDILSRA.

It belongs to the GreA/GreB family.

Its function is as follows. Necessary for efficient RNA polymerase transcription elongation past template-encoded arresting sites. The arresting sites in DNA have the property of trapping a certain fraction of elongating RNA polymerases that pass through, resulting in locked ternary complexes. Cleavage of the nascent transcript by cleavage factors such as GreA or GreB allows the resumption of elongation from the new 3'terminus. GreA releases sequences of 2 to 3 nucleotides. The protein is Transcription elongation factor GreA of Nautilia profundicola (strain ATCC BAA-1463 / DSM 18972 / AmH).